A 182-amino-acid chain; its full sequence is Putative CTD phosphatase-like protein 355R (182 aa).

An FCP1 homology domain is found at 1–180 (MKNIFLDLDN…MRLKDVLNRH (180 aa)).

This sequence belongs to the IIV-6 355R family.

In terms of biological role, may function as a phosphatase. The polypeptide is Putative CTD phosphatase-like protein 355R (Invertebrate iridescent virus 6 (IIV-6)).